Here is a 956-residue protein sequence, read N- to C-terminus: Golgin candidate 5 (956 aa).

Disordered regions lie at residues 70–230 (MSFM…QHKI) and 278–298 (IFES…SSDE). Composition is skewed to basic and acidic residues over residues 77–89 (SDEK…DSVR) and 118–129 (ANKETNVRREAD). Composition is skewed to polar residues over residues 160–177 (EYSL…SLQP) and 184–193 (TASQDSQPEQ). The span at 206–219 (SEAKEVTVENKDTV) shows a compositional bias: basic and acidic residues. The stretch at 333–765 (SDSADVILEL…LIQKDLEREK (433 aa)) forms a coiled coil. A Phosphoserine modification is found at Ser793. A coiled-coil region spans residues 851–951 (SAYEATLRQK…EMYREQVNML (101 aa)).

As to quaternary structure, interacts with RABH1B and RABH1C, but not with RABD1 or RABD2A.

It localises to the golgi apparatus. It is found in the cytoplasm. Functionally, golgi matrix protein playing a role in tethering of vesicles to Golgi membranes and in maintaining the overall structure of the Golgi apparatus. The sequence is that of Golgin candidate 5 (GC5) from Arabidopsis thaliana (Mouse-ear cress).